The following is a 170-amino-acid chain: Keratin-associated protein 9-2 (170 aa).

Repeat copies occupy residues 8–12, 13–17, 18–22, 37–41, 42–46, 51–55, 61–65, 66–70, 75–79, 80–84, 85–89, 90–94, 95–99, 140–144, 145–149, 150–154, and 164–168. Residues 8-168 form a 17 X 5 AA repeats of C-C-[RQVSGE]-[SPTQ]-[TASP] region; it reads CCQPTCCRTT…TCVSSCCQPS (161 aa).

Belongs to the KRTAP type 9 family. Interacts with hair keratins.

Functionally, in the hair cortex, hair keratin intermediate filaments are embedded in an interfilamentous matrix, consisting of hair keratin-associated proteins (KRTAP), which are essential for the formation of a rigid and resistant hair shaft through their extensive disulfide bond cross-linking with abundant cysteine residues of hair keratins. The matrix proteins include the high-sulfur and high-glycine-tyrosine keratins. The chain is Keratin-associated protein 9-2 (KRTAP9-2) from Pan troglodytes (Chimpanzee).